The chain runs to 424 residues: 3-isopropylmalate dehydratase large subunit 2 (424 aa).

[4Fe-4S] cluster is bound by residues Cys299, Cys359, and Cys362.

It belongs to the aconitase/IPM isomerase family. LeuC type 2 subfamily. In terms of assembly, heterodimer of LeuC and LeuD. Requires [4Fe-4S] cluster as cofactor.

It carries out the reaction (2R,3S)-3-isopropylmalate = (2S)-2-isopropylmalate. Its pathway is amino-acid biosynthesis; L-leucine biosynthesis; L-leucine from 3-methyl-2-oxobutanoate: step 2/4. Catalyzes the isomerization between 2-isopropylmalate and 3-isopropylmalate, via the formation of 2-isopropylmaleate. This is 3-isopropylmalate dehydratase large subunit 2 from Rubrobacter xylanophilus (strain DSM 9941 / JCM 11954 / NBRC 16129 / PRD-1).